The primary structure comprises 334 residues: Transcription initiation factor IIB (334 aa).

Residues 34 to 65 (TESVCPECKSRQLVHDYERAELVCQNCGLVID) form a TFIIB-type zinc finger. Zn(2+)-binding residues include cysteine 38, cysteine 41, cysteine 57, and cysteine 60. Tandem repeats lie at residues 151-234 (SELD…SREL) and 245-326 (DYVP…ELAE).

It belongs to the TFIIB family.

In terms of biological role, stabilizes TBP binding to an archaeal box-A promoter. Also responsible for recruiting RNA polymerase II to the pre-initiation complex (DNA-TBP-TFIIB). The chain is Transcription initiation factor IIB from Methanosphaerula palustris (strain ATCC BAA-1556 / DSM 19958 / E1-9c).